The following is a 510-amino-acid chain: NAD(P)H-quinone oxidoreductase subunit 2 A, chloroplastic (510 aa).

The next 12 helical transmembrane spans lie at 31-51, 59-79, 99-119, 124-144, 149-169, 183-203, 229-249, 295-315, 323-343, 354-374, 395-415, and 418-438; these read FIFP…IDLT, WFYF…LFRW, IFQF…VEYI, MAIT…MFLC, LITI…LSGY, YLLM…WLYG, ISIA…PAPF, WHLL…LLAI, MLAY…IVGD, YMLF…LFGL, ALSL…AGFF, and LYLF…IGLL.

It belongs to the complex I subunit 2 family. In terms of assembly, NDH is composed of at least 16 different subunits, 5 of which are encoded in the nucleus.

The protein resides in the plastid. Its subcellular location is the chloroplast thylakoid membrane. The enzyme catalyses a plastoquinone + NADH + (n+1) H(+)(in) = a plastoquinol + NAD(+) + n H(+)(out). It carries out the reaction a plastoquinone + NADPH + (n+1) H(+)(in) = a plastoquinol + NADP(+) + n H(+)(out). Its function is as follows. NDH shuttles electrons from NAD(P)H:plastoquinone, via FMN and iron-sulfur (Fe-S) centers, to quinones in the photosynthetic chain and possibly in a chloroplast respiratory chain. The immediate electron acceptor for the enzyme in this species is believed to be plastoquinone. Couples the redox reaction to proton translocation, and thus conserves the redox energy in a proton gradient. In Oryza nivara (Indian wild rice), this protein is NAD(P)H-quinone oxidoreductase subunit 2 A, chloroplastic.